A 306-amino-acid polypeptide reads, in one-letter code: D-alanine--D-alanine ligase (306 aa).

An ATP-grasp domain is found at 101-300 (KVVMAAAGIP…FGELVTWMVE (200 aa)). An ATP-binding site is contributed by 128–182 (LPPPYVLKPNTGGSSVGVFIVKEDQPHPPQELFRADWTFGESLMAEPFIKGLELT). Residues Asp250, Glu267, and Asn269 each coordinate Mg(2+).

It belongs to the D-alanine--D-alanine ligase family. The cofactor is Mg(2+). It depends on Mn(2+) as a cofactor.

Its subcellular location is the cytoplasm. It catalyses the reaction 2 D-alanine + ATP = D-alanyl-D-alanine + ADP + phosphate + H(+). It functions in the pathway cell wall biogenesis; peptidoglycan biosynthesis. In terms of biological role, cell wall formation. The protein is D-alanine--D-alanine ligase of Azorhizobium caulinodans (strain ATCC 43989 / DSM 5975 / JCM 20966 / LMG 6465 / NBRC 14845 / NCIMB 13405 / ORS 571).